Reading from the N-terminus, the 111-residue chain is Anti-adapter protein IraM (111 aa).

This sequence belongs to the IraM/RssC family.

The protein localises to the cytoplasm. In terms of biological role, inhibits RpoS proteolysis by regulating RssB activity, thereby increasing the stability of the sigma stress factor RpoS during magnesium starvation. This Escherichia coli O127:H6 (strain E2348/69 / EPEC) protein is Anti-adapter protein IraM.